We begin with the raw amino-acid sequence, 313 residues long: GTP cyclohydrolase MptA (313 aa).

The protein belongs to the GTP cyclohydrolase IV family. Homodimer. Requires Fe(2+) as cofactor.

The enzyme catalyses GTP + H2O = 7,8-dihydroneopterin 2',3'-cyclic phosphate + formate + diphosphate + H(+). It participates in cofactor biosynthesis; 5,6,7,8-tetrahydromethanopterin biosynthesis. In terms of biological role, converts GTP to 7,8-dihydro-D-neopterin 2',3'-cyclic phosphate, the first intermediate in the biosynthesis of coenzyme methanopterin. In Methanoculleus marisnigri (strain ATCC 35101 / DSM 1498 / JR1), this protein is GTP cyclohydrolase MptA.